Here is a 617-residue protein sequence, read N- to C-terminus: Proline--tRNA ligase (617 aa).

It belongs to the class-II aminoacyl-tRNA synthetase family. ProS type 1 subfamily. As to quaternary structure, homodimer.

The protein localises to the cytoplasm. It catalyses the reaction tRNA(Pro) + L-proline + ATP = L-prolyl-tRNA(Pro) + AMP + diphosphate. Catalyzes the attachment of proline to tRNA(Pro) in a two-step reaction: proline is first activated by ATP to form Pro-AMP and then transferred to the acceptor end of tRNA(Pro). As ProRS can inadvertently accommodate and process non-cognate amino acids such as alanine and cysteine, to avoid such errors it has two additional distinct editing activities against alanine. One activity is designated as 'pretransfer' editing and involves the tRNA(Pro)-independent hydrolysis of activated Ala-AMP. The other activity is designated 'posttransfer' editing and involves deacylation of mischarged Ala-tRNA(Pro). The misacylated Cys-tRNA(Pro) is not edited by ProRS. In Streptococcus pneumoniae (strain P1031), this protein is Proline--tRNA ligase.